The primary structure comprises 96 residues: Probable quinol oxidase subunit 4 (96 aa).

Transmembrane regions (helical) follow at residues 8 to 28 (TVGF…TLYT), 37 to 57 (TIIF…FMHL), and 68 to 88 (FKVI…YWVM).

The protein belongs to the cytochrome c oxidase bacterial subunit 4 family.

The protein resides in the cell membrane. The enzyme catalyses 2 a quinol + O2 = 2 a quinone + 2 H2O. In terms of biological role, catalyzes quinol oxidation with the concomitant reduction of oxygen to water. In Staphylococcus haemolyticus (strain JCSC1435), this protein is Probable quinol oxidase subunit 4 (qoxD).